Reading from the N-terminus, the 305-residue chain is UDP-3-O-acyl-N-acetylglucosamine deacetylase (305 aa).

Zn(2+) is bound by residues H78, H237, and D241. H264 (proton donor) is an active-site residue.

The protein belongs to the LpxC family. Zn(2+) serves as cofactor.

The enzyme catalyses a UDP-3-O-[(3R)-3-hydroxyacyl]-N-acetyl-alpha-D-glucosamine + H2O = a UDP-3-O-[(3R)-3-hydroxyacyl]-alpha-D-glucosamine + acetate. It functions in the pathway glycolipid biosynthesis; lipid IV(A) biosynthesis; lipid IV(A) from (3R)-3-hydroxytetradecanoyl-[acyl-carrier-protein] and UDP-N-acetyl-alpha-D-glucosamine: step 2/6. Catalyzes the hydrolysis of UDP-3-O-myristoyl-N-acetylglucosamine to form UDP-3-O-myristoylglucosamine and acetate, the committed step in lipid A biosynthesis. This chain is UDP-3-O-acyl-N-acetylglucosamine deacetylase, found in Cupriavidus taiwanensis (strain DSM 17343 / BCRC 17206 / CCUG 44338 / CIP 107171 / LMG 19424 / R1) (Ralstonia taiwanensis (strain LMG 19424)).